Here is a 109-residue protein sequence, read N- to C-terminus: U26-theraphotoxin-Cg1a (109 aa).

The signal sequence occupies residues 1-18; the sequence is MNTIIPLLLLSLLITVYA. A propeptide spanning residues 19–67 is cleaved from the precursor; sequence YALEDGNKEEIQDIAESEFEASNEMLQLAHLLEADRAETEEDRNSRQKR. Intrachain disulfides connect C68–C83, C75–C88, and C82–C103.

It belongs to the neurotoxin 14 (magi-1) family. 07 (Jztx-56) subfamily. Expressed by the venom gland.

It is found in the secreted. Its function is as follows. Probable ion channel inhibitor. This Chilobrachys guangxiensis (Chinese earth tiger tarantula) protein is U26-theraphotoxin-Cg1a.